The primary structure comprises 696 residues: Transcriptional activator of proteases prtT (696 aa).

Positions Asp106–Lys126 are disordered. Residues Cys136–Cys165 constitute a DNA-binding region (zn(2)-C6 fungal-type).

This sequence belongs to the prtT family.

The protein localises to the nucleus. Its function is as follows. Transcription factor required for protein utilization and degradation. Regulates transcription of major secreted proteases including a serine alkaline protease (alk1), a metalloprotease (mep), an aspergillopepsin (pep1), a sedolisin (sed2) and two dipeptidyl-peptidases (dppIV and dppV). However, it is not a virulence determinant in leukopenic mice. In Aspergillus fumigatus (strain ATCC MYA-4609 / CBS 101355 / FGSC A1100 / Af293) (Neosartorya fumigata), this protein is Transcriptional activator of proteases prtT (prtT).